Reading from the N-terminus, the 351-residue chain is Carbamoyl phosphate synthase small chain (351 aa).

Residues 1-171 form a CPSase region; that stretch reads MKGIIYLEDG…IIHIAGNGNK (171 aa). Positions 45, 219, and 221 each coordinate L-glutamine. One can recognise a Glutamine amidotransferase type-1 domain in the interval 171–351; the sequence is KVAVMDFGIK…TYLFDQFVNL (181 aa). Cys246 functions as the Nucleophile in the catalytic mechanism. Leu247, Gln250, Asn288, Gly290, and Tyr291 together coordinate L-glutamine. Catalysis depends on residues His331 and Glu333.

Belongs to the CarA family. As to quaternary structure, composed of two chains; the small (or glutamine) chain promotes the hydrolysis of glutamine to ammonia, which is used by the large (or ammonia) chain to synthesize carbamoyl phosphate. Tetramer of heterodimers (alpha,beta)4.

The catalysed reaction is hydrogencarbonate + L-glutamine + 2 ATP + H2O = carbamoyl phosphate + L-glutamate + 2 ADP + phosphate + 2 H(+). It carries out the reaction L-glutamine + H2O = L-glutamate + NH4(+). Its pathway is amino-acid biosynthesis; L-arginine biosynthesis; carbamoyl phosphate from bicarbonate: step 1/1. The protein operates within pyrimidine metabolism; UMP biosynthesis via de novo pathway; (S)-dihydroorotate from bicarbonate: step 1/3. In terms of biological role, small subunit of the glutamine-dependent carbamoyl phosphate synthetase (CPSase). CPSase catalyzes the formation of carbamoyl phosphate from the ammonia moiety of glutamine, carbonate, and phosphate donated by ATP, constituting the first step of 2 biosynthetic pathways, one leading to arginine and/or urea and the other to pyrimidine nucleotides. The small subunit (glutamine amidotransferase) binds and cleaves glutamine to supply the large subunit with the substrate ammonia. In Clostridium acetobutylicum (strain ATCC 824 / DSM 792 / JCM 1419 / IAM 19013 / LMG 5710 / NBRC 13948 / NRRL B-527 / VKM B-1787 / 2291 / W), this protein is Carbamoyl phosphate synthase small chain.